Consider the following 219-residue polypeptide: MGNLFVKKPQITEVDRAILSLKTQRRKLGQYQQKLEKVIEAEKQAARDLIREKRKDRALLALRKKRTQEELLKQVDQWVINVEQQLTDIELTSKQKAVFESLKQGNSAIKAIQSELDLDDVQKLMDDTADAKAYQDELNAILGEKLSAEDEEDILAEFDNLESQLIVDEMPEVPTKESEESEKLDLPDVPTKTPVASNAEITPAESATKTKVLEEPLPA.

The stretch at 20–60 (SLKTQRRKLGQYQQKLEKVIEAEKQAARDLIREKRKDRALL) forms a coiled coil. The disordered stretch occupies residues 171–219 (PEVPTKESEESEKLDLPDVPTKTPVASNAEITPAESATKTKVLEEPLPA). Residues 174–186 (PTKESEESEKLDL) are compositionally biased toward basic and acidic residues. Over residues 194–209 (PVASNAEITPAESATK) the composition is skewed to polar residues.

It belongs to the SNF7 family. In terms of assembly, component of the endosomal sorting required for transport complex III (ESCRT-III), composed at least of VPS2, VPS20, VPS24 and VPS32. Interacts with SKD1.

Its subcellular location is the endosome. Component of the ESCRT-III complex, which is required for multivesicular bodies (MVBs) formation and sorting of endosomal cargo proteins into MVBs. The ESCRT-III complex is probably involved in the concentration of MVB cargo. This is Vacuolar protein sorting-associated protein 20 homolog 1 (VPS20.1) from Arabidopsis thaliana (Mouse-ear cress).